The sequence spans 220 residues: Adenylate kinase (220 aa).

ATP is bound at residue 10-15 (GAGKGT). The tract at residues 30–59 (STGDMLRAAVKAGTPLGVEAKGYMDAGKLV) is NMP. AMP-binding positions include threonine 31, arginine 36, 57–59 (KLV), 85–88 (GFPR), and glutamine 92. Residues 122–159 (GRRTHPASGRTYHVKFNPPKVEGHDDVTGEPLIQRDDD) form an LID region. ATP-binding positions include arginine 123 and 132–133 (TY). Residues arginine 156 and arginine 167 each coordinate AMP. Glycine 206 is a binding site for ATP.

Belongs to the adenylate kinase family. Monomer.

It is found in the cytoplasm. It carries out the reaction AMP + ATP = 2 ADP. The protein operates within purine metabolism; AMP biosynthesis via salvage pathway; AMP from ADP: step 1/1. In terms of biological role, catalyzes the reversible transfer of the terminal phosphate group between ATP and AMP. Plays an important role in cellular energy homeostasis and in adenine nucleotide metabolism. This chain is Adenylate kinase, found in Burkholderia lata (strain ATCC 17760 / DSM 23089 / LMG 22485 / NCIMB 9086 / R18194 / 383).